We begin with the raw amino-acid sequence, 836 residues long: Translation initiation factor IF-2 (836 aa).

Residues 1-17 (MLRLMRQKKLSIQRRTK) show a composition bias toward basic residues. Disordered regions lie at residues 1 to 43 (MLRL…RTVK) and 83 to 240 (AAKK…KGAA). The span at 18–27 (TTVSSTTTGG) shows a compositional bias: low complexity. Positions 83 to 153 (AAKKEADEKV…AAEEAKRYAE (71 aa)) are enriched in basic and acidic residues. Acidic residues predominate over residues 154–167 (ADDSDNESSSEDYS). Residues 192–202 (RGKNKVAKAKK) are compositionally biased toward basic residues. Basic and acidic residues predominate over residues 203–229 (GGRDDENSKNSKNERESNRKNQKDAKF). In terms of domain architecture, tr-type G spans 335–505 (TRAPVVTIMG…LLQSEVLELT (171 aa)). The interval 344-351 (GHVDHGKT) is G1. Residue 344–351 (GHVDHGKT) participates in GTP binding. Positions 369-373 (GITQH) are G2. The G3 stretch occupies residues 391–394 (DTPG). Residues 391 to 395 (DTPGH) and 445 to 448 (NKID) each bind GTP. Residues 445–448 (NKID) form a G4 region. A G5 region spans residues 481–483 (SAK).

It belongs to the TRAFAC class translation factor GTPase superfamily. Classic translation factor GTPase family. IF-2 subfamily.

The protein localises to the cytoplasm. One of the essential components for the initiation of protein synthesis. Protects formylmethionyl-tRNA from spontaneous hydrolysis and promotes its binding to the 30S ribosomal subunits. Also involved in the hydrolysis of GTP during the formation of the 70S ribosomal complex. This Haemophilus influenzae (strain PittEE) protein is Translation initiation factor IF-2.